The primary structure comprises 700 residues: Methionine--tRNA ligase (700 aa).

Positions 13 to 23 match the 'HIGH' region motif; sequence PYANGDIHLGH. Zn(2+)-binding residues include C144, C147, C157, and C160. The short motif at 341 to 345 is the 'KMSKS' region element; the sequence is KMSKS. K344 contacts ATP. The tRNA-binding domain maps to 598–700; sequence DFAKVEMKVA…DNCVIGDLLA (103 aa).

The protein belongs to the class-I aminoacyl-tRNA synthetase family. MetG type 1 subfamily. As to quaternary structure, homodimer. The cofactor is Zn(2+).

It is found in the cytoplasm. The enzyme catalyses tRNA(Met) + L-methionine + ATP = L-methionyl-tRNA(Met) + AMP + diphosphate. In terms of biological role, is required not only for elongation of protein synthesis but also for the initiation of all mRNA translation through initiator tRNA(fMet) aminoacylation. This Psychrobacter arcticus (strain DSM 17307 / VKM B-2377 / 273-4) protein is Methionine--tRNA ligase.